The chain runs to 301 residues: Probable alpha-L-glutamate ligase 1 (301 aa).

Residues 104-287 (LQLLSRKGIG…VTEPIVEYIE (184 aa)) form the ATP-grasp domain. Residues Lys-141, 178-179 (EY), Asp-187, and 211-213 (RSN) each bind ATP. Mg(2+) contacts are provided by Asp-248, Glu-260, and Asn-262. 3 residues coordinate Mn(2+): Asp-248, Glu-260, and Asn-262.

Belongs to the RimK family. Requires Mg(2+) as cofactor. Mn(2+) serves as cofactor.

This Shewanella sp. (strain MR-4) protein is Probable alpha-L-glutamate ligase 1.